Reading from the N-terminus, the 303-residue chain is N-acetyl-D-glucosamine kinase (303 aa).

Residues 4–11 (GFDVGGTK) and 133–140 (GFGGGLIF) each bind ATP. Zn(2+)-binding residues include histidine 157, cysteine 177, cysteine 179, and cysteine 184.

Belongs to the ROK (NagC/XylR) family. NagK subfamily.

It catalyses the reaction N-acetyl-D-glucosamine + ATP = N-acetyl-D-glucosamine 6-phosphate + ADP + H(+). It participates in cell wall biogenesis; peptidoglycan recycling. Its function is as follows. Catalyzes the phosphorylation of N-acetyl-D-glucosamine (GlcNAc) derived from cell-wall degradation, yielding GlcNAc-6-P. The polypeptide is N-acetyl-D-glucosamine kinase (Aliivibrio fischeri (strain ATCC 700601 / ES114) (Vibrio fischeri)).